Consider the following 333-residue polypeptide: Transcription initiation factor IIB (333 aa).

A TFIIB-type zinc finger spans residues 33–64 (EIYRCPICGNDRFVYNYERGEVVCIVCGAVVQ). Positions 37, 40, 56, and 59 each coordinate Zn(2+). Repeat copies occupy residues 149-232 (QELE…LREL) and 243-324 (LYIS…ELAK).

Belongs to the TFIIB family.

Its function is as follows. Stabilizes TBP binding to an archaeal box-A promoter. Also responsible for recruiting RNA polymerase II to the pre-initiation complex (DNA-TBP-TFIIB). The sequence is that of Transcription initiation factor IIB from Pyrobaculum arsenaticum (strain DSM 13514 / JCM 11321 / PZ6).